The primary structure comprises 198 residues: V-type proton ATPase subunit E (198 aa).

It belongs to the V-ATPase E subunit family.

In terms of biological role, produces ATP from ADP in the presence of a proton gradient across the membrane. The protein is V-type proton ATPase subunit E of Borrelia turicatae (strain 91E135).